The chain runs to 179 residues: SCAN domain-containing protein 1 (179 aa).

Positions 1-107 (MAATEPILAT…AGSRLGPETF (107 aa)) are disordered. The segment covering 52–80 (SPNAAVPEAIPTPRAAASAALELPLGPAP) has biased composition (low complexity). An SCAN box domain is found at 108-166 (RQRFRQFRYQDAAGPREAFRQLRELSRQWLRPDIRTKEQIVEMLVQEQLLAILPEAARA).

Interacts with ZNF202.

Its subcellular location is the nucleus. Its function is as follows. May regulate transcriptional activity. The sequence is that of SCAN domain-containing protein 1 (SCAND1) from Pan paniscus (Pygmy chimpanzee).